The sequence spans 483 residues: MVAVTEQTNVGKITQVIGPVVDAEFPSGKLPRIYNALKIQGKNPAGNDVSVTCEVQQLLGDNQVRAVAMSGTDGLVRGMDIVDTGAPISVPVGKVTLGRIFNVLGEPVDEKGDVDMSLTSPIHRPAPKLIDLETKPKVFETGIKVIDLLTPYRQGGKIGLFGGAGVGKTVIMMELINNIAINHGGVSVFAGVGERTREGNDLYNEMIESKVINPDNPEESKIALVYGQMNEPPGARMRVGLSGLTMAEYFRDVNKQDVLLFVDNIFRFVQAGSEVSALLGRMPSAVGYQPTLGTDVGDLQERITSTKEGSITSVQAVYVPADDLTDPAPATTFAHLDGTTVLSRGLASKGIYPAVDPLDSTSTMLQPGIVGEEHYNTARAVQSTLQRYKELQDIIAILGLDELSEEDRRTVDRARKIERFLSQPFFVAEVFTGSPGKYVTLKDTIKGFQMILNGELDDLPEQAFYLVGDIEEAKAKAEKLKKG.

162–169 (GGAGVGKT) is a binding site for ATP.

This sequence belongs to the ATPase alpha/beta chains family. F-type ATPases have 2 components, CF(1) - the catalytic core - and CF(0) - the membrane proton channel. CF(1) has five subunits: alpha(3), beta(3), gamma(1), delta(1), epsilon(1). CF(0) has four main subunits: a(1), b(1), b'(1) and c(9-12).

The protein localises to the cellular thylakoid membrane. The catalysed reaction is ATP + H2O + 4 H(+)(in) = ADP + phosphate + 5 H(+)(out). In terms of biological role, produces ATP from ADP in the presence of a proton gradient across the membrane. The catalytic sites are hosted primarily by the beta subunits. In Rippkaea orientalis (strain PCC 8801 / RF-1) (Cyanothece sp. (strain PCC 8801)), this protein is ATP synthase subunit beta.